Reading from the N-terminus, the 154-residue chain is Ribonuclease H (154 aa).

The region spanning 5–146 (EQNIVYLYCD…ADELANRGID (142 aa)) is the RNase H type-1 domain. The Mg(2+) site is built by aspartate 14, glutamate 52, aspartate 74, and aspartate 138.

It belongs to the RNase H family. Monomer. The cofactor is Mg(2+).

The protein resides in the cytoplasm. It catalyses the reaction Endonucleolytic cleavage to 5'-phosphomonoester.. Its function is as follows. Endonuclease that specifically degrades the RNA of RNA-DNA hybrids. The protein is Ribonuclease H of Coxiella burnetii (strain CbuK_Q154) (Coxiella burnetii (strain Q154)).